We begin with the raw amino-acid sequence, 339 residues long: Anthranilate phosphoribosyltransferase (339 aa).

Residues Gly82, 85 to 86, Thr90, 92 to 95, and 110 to 118 each bind 5-phospho-alpha-D-ribose 1-diphosphate; these read GD, NIST, and KHGNRAVSS. Gly82 serves as a coordination point for anthranilate. A Mg(2+)-binding site is contributed by Ser94. Anthranilate is bound by residues Asn113 and Arg168. Positions 227 and 228 each coordinate Mg(2+).

It belongs to the anthranilate phosphoribosyltransferase family. Homodimer. Mg(2+) is required as a cofactor.

The enzyme catalyses N-(5-phospho-beta-D-ribosyl)anthranilate + diphosphate = 5-phospho-alpha-D-ribose 1-diphosphate + anthranilate. It participates in amino-acid biosynthesis; L-tryptophan biosynthesis; L-tryptophan from chorismate: step 2/5. Functionally, catalyzes the transfer of the phosphoribosyl group of 5-phosphorylribose-1-pyrophosphate (PRPP) to anthranilate to yield N-(5'-phosphoribosyl)-anthranilate (PRA). This is Anthranilate phosphoribosyltransferase from Clostridium beijerinckii (strain ATCC 51743 / NCIMB 8052) (Clostridium acetobutylicum).